The primary structure comprises 291 residues: Meiosis-specific protein SPO13 (291 aa).

3 disordered regions span residues 1–30 (MAPRKRFRLLELGSPTHSKRKVQKPLQEKT), 116–143 (SFDNSLRFEDIEQPPKSTSTPVLSQSSQ), and 271–291 (CSDYESSGQNATYNDSESSLN). The Nuclear localization signal signature appears at 3–6 (PRKR). Positions 116–125 (SFDNSLRFED) are enriched in basic and acidic residues. Over residues 130–143 (PKSTSTPVLSQSSQ) the composition is skewed to polar residues.

The protein localises to the nucleus. Required for meiosis I segmentation. Probably acts as a regulator of kinetochore function during meiosis I: required both for mono-orientation of kinetochores on sister chromosomes and protection of centromeric cohesin from separase-mediated cleavage. This Saccharomyces cerevisiae (strain ATCC 204508 / S288c) (Baker's yeast) protein is Meiosis-specific protein SPO13 (SPO13).